A 302-amino-acid polypeptide reads, in one-letter code: Succinate--CoA ligase [ADP-forming] subunit alpha (302 aa).

CoA-binding positions include 17 to 20 (TGST), Lys-43, and 96 to 98 (ITE). Tyr-159 serves as a coordination point for substrate. Residue His-247 is the Tele-phosphohistidine intermediate of the active site.

Belongs to the succinate/malate CoA ligase alpha subunit family. Heterotetramer of two alpha and two beta subunits.

The enzyme catalyses succinate + ATP + CoA = succinyl-CoA + ADP + phosphate. It catalyses the reaction GTP + succinate + CoA = succinyl-CoA + GDP + phosphate. Its pathway is carbohydrate metabolism; tricarboxylic acid cycle; succinate from succinyl-CoA (ligase route): step 1/1. Succinyl-CoA synthetase functions in the citric acid cycle (TCA), coupling the hydrolysis of succinyl-CoA to the synthesis of either ATP or GTP and thus represents the only step of substrate-level phosphorylation in the TCA. The alpha subunit of the enzyme binds the substrates coenzyme A and phosphate, while succinate binding and nucleotide specificity is provided by the beta subunit. The chain is Succinate--CoA ligase [ADP-forming] subunit alpha from Staphylococcus aureus (strain COL).